The chain runs to 275 residues: Large ribosomal subunit protein uL2 (275 aa).

The segment at 208–275 (AGAKRWRGRR…NMIIRDRRKK (68 aa)) is disordered. 2 stretches are compositionally biased toward basic residues: residues 209–219 (GAKRWRGRRPT) and 254–263 (KGYKTRRNKR).

It belongs to the universal ribosomal protein uL2 family. Part of the 50S ribosomal subunit. Forms a bridge to the 30S subunit in the 70S ribosome.

Functionally, one of the primary rRNA binding proteins. Required for association of the 30S and 50S subunits to form the 70S ribosome, for tRNA binding and peptide bond formation. It has been suggested to have peptidyltransferase activity; this is somewhat controversial. Makes several contacts with the 16S rRNA in the 70S ribosome. The sequence is that of Large ribosomal subunit protein uL2 from Coxiella burnetii (strain CbuG_Q212) (Coxiella burnetii (strain Q212)).